The primary structure comprises 303 residues: RELT-like protein 2 (303 aa).

A helical membrane pass occupies residues leucine 15–isoleucine 35. Disordered stretches follow at residues arginine 47–asparagine 68, cysteine 135–threonine 214, and proline 249–methionine 303. Residue serine 52 is modified to Phosphoserine. Composition is skewed to basic and acidic residues over residues arginine 148–proline 158 and threonine 172–proline 188. Residues glycine 194–proline 212 show a composition bias toward gly residues. A compositionally biased stretch (polar residues) spans glycine 274–serine 295.

It belongs to the RELT family. Interacts with RELT, RELL1, OXSR1, PLSCR1 and TRAF2.

Its subcellular location is the cell membrane. In terms of biological role, induces activation of MAPK14/p38 cascade, when overexpressed. Induces apoptosis, when overexpressed. This chain is RELT-like protein 2 (Rell2), found in Mus musculus (Mouse).